Consider the following 329-residue polypeptide: Ribosome biogenesis regulatory protein homolog (329 aa).

Disordered regions lie at residues 227–248 and 262–329; these read KANI…VSAE and KKAK…NKRK. A compositionally biased stretch (basic and acidic residues) spans 278–295; it reads LREKKEKQEKKGAKEATR. Positions 320-329 are enriched in basic residues; it reads AKKKGANKRK.

It belongs to the RRS1 family.

Its subcellular location is the nucleus. The protein resides in the nucleolus. Involved in ribosomal large subunit assembly. The chain is Ribosome biogenesis regulatory protein homolog from Caenorhabditis briggsae.